The primary structure comprises 544 residues: Cytochrome P450 monooxygenase notG' (544 aa).

The signal sequence occupies residues 1-22 (MELPFSAMSLLYLLVGIAGVIS). A run of 2 helical transmembrane segments spans residues 42 to 62 (WYTL…GLPL) and 66 to 86 (AKAT…SLLL). 2 N-linked (GlcNAc...) asparagine glycosylation sites follow: asparagine 226 and asparagine 404. Residue cysteine 487 participates in heme binding.

It belongs to the cytochrome P450 family. Heme is required as a cofactor.

It localises to the membrane. The protein operates within alkaloid biosynthesis. In terms of biological role, cytochrome P450 monooxygenase; part of the gene cluster that mediates the biosynthesis of notoamide, a fungal indole alkaloid that belongs to a family of natural products containing a characteristic bicyclo[2.2.2]diazaoctane core. The first step of notoamide biosynthesis involves coupling of L-proline and L-tryptophan by the bimodular NRPS notE', to produce cyclo-L-tryptophan-L-proline called brevianamide F. The reverse prenyltransferase notF' then acts as a deoxybrevianamide E synthase and converts brevianamide F to deoxybrevianamide E via reverse prenylation at C-2 of the indole ring leading to the bicyclo[2.2.2]diazaoctane core. Deoxybrevianamide E is further hydroxylated at C-6 of the indole ring, likely catalyzed by the cytochrome P450 monooxygenase notG', to yield 6-hydroxy-deoxybrevianamide E. 6-hydroxy-deoxybrevianamide E is a specific substrate of the prenyltransferase notC' for normal prenylation at C-7 to produce 6-hydroxy-7-prenyl-deoxybrevianamide, also called notoamide S. As the proposed pivotal branching point in notoamide biosynthesis, notoamide S can be diverted to notoamide E through an oxidative pyran ring closure putatively catalyzed by either notH' cytochrome P450 monooxygenase or the notD' FAD-linked oxidoreductase. This step would be followed by an indole 2,3-epoxidation-initiated pinacol-like rearrangement catalyzed by the notB' FAD-dependent monooxygenase leading to the formation of notoamide C and notoamide D. On the other hand notoamide S is converted to notoamide T by notH' (or notD'), a bifunctional oxidase that also functions as the intramolecular Diels-Alderase responsible for generation of (-)-notoamide T. To generate antipodal (+)-notoaminide T, notH (or notD) in Aspergillus strain MF297-2 is expected to catalyze a Diels-Alder reaction leading to the opposite stereochemistry. The remaining oxidoreductase notD' (or notH') likely catalyzes the oxidative pyran ring formation to yield (-)-stephacidin A. The FAD-dependent monooxygenase notI' is highly similar to notB' and is predicted to catalyze a similar conversion from (-)-stephacidin A to (+)-notoamide B via the 2,3-epoxidation of (-)-stephacidin A followed by a pinacol-type rearrangement. Finally, it remains unclear which enzyme could be responsible for the final hydroxylation steps leading to notoamide A and sclerotiamide. This is Cytochrome P450 monooxygenase notG' from Aspergillus versicolor.